A 791-amino-acid chain; its full sequence is Genome polyprotein (791 aa).

The interaction with host EXOC1 stretch occupies residues 1–15; sequence MNNQRKKTGRPSFNM. The Cytoplasmic portion of the chain corresponds to 1–101; sequence MNNQRKKTGR…LNIMNRRKRS (101 aa). The hydrophobic; homodimerization of capsid protein C stretch occupies residues 37–72; the sequence is LLSGQGPMKLVMAFIAFLRFLAIPPTAGILARWSSF. A propeptide spans 101–114 (ER anchor for the capsid protein C, removed in mature form by serine protease NS3); the sequence is SVTMLLMLLPTALA. The helical transmembrane segment at 102–119 threads the bilayer; that stretch reads VTMLLMLLPTALAFHLTT. Residues 120–242 are Extracellular-facing; it reads RGGEPTLIVS…QIQKVETWAL (123 aa). A glycan (N-linked (GlcNAc...) asparagine; by host) is linked at N183. A helical transmembrane segment spans residues 243 to 260; it reads RHPGFTVIGLFLAHAIGT. Position 261 (S261) is a topological domain, cytoplasmic. A helical transmembrane segment spans residues 262 to 280; the sequence is ITQKGIIFILLMLVTPSMA. The Extracellular segment spans residues 281–725; that stretch reads MRCVGIGNRD…IHQIFGTAYG (445 aa). 4 disulfides stabilise this stretch: C283–C310, C340–C401, C354–C385, and C372–C396. An N-linked (GlcNAc...) asparagine; by host glycan is attached at N347. Residues 378–391 are fusion peptide; sequence DRGWGNGCGLFGKG. N433 is a glycosylation site (N-linked (GlcNAc...) asparagine; by host). 2 cysteine pairs are disulfide-bonded: C465-C565 and C582-C613. Residues 726 to 746 form a helical membrane-spanning segment; it reads ILFSGVSWTMKIGIGILLTWL. Residues 747–752 lie on the Cytoplasmic side of the membrane; it reads GLNSRS. The chain crosses the membrane as a helical span at residues 753 to 775; the sequence is TSLSMTCIAVGMVTLYLGVMVQA. The Extracellular segment spans residues 776 to 791; that stretch reads DSGCVINWKGKELKCG. The cysteines at positions 779 and 790 are disulfide-linked.

In terms of assembly, homodimer. Interacts (via N-terminus) with host EXOC1 (via C-terminus); this interaction results in EXOC1 degradation through the proteasome degradation pathway. Forms heterodimers with envelope protein E in the endoplasmic reticulum and Golgi. As to quaternary structure, homodimer; in the endoplasmic reticulum and Golgi. Interacts with protein prM. Interacts with non-structural protein 1. In terms of assembly, homodimer; Homohexamer when secreted. Interacts with envelope protein E. Post-translationally, specific enzymatic cleavages in vivo yield mature proteins. Cleavages in the lumen of endoplasmic reticulum are performed by host signal peptidase, wereas cleavages in the cytoplasmic side are performed by serine protease NS3. Signal cleavage at the 2K-4B site requires a prior NS3 protease-mediated cleavage at the 4A-2K site. N-glycosylated. In terms of processing, N-glycosylated. The excreted form is glycosylated and this is required for efficient secretion of the protein from infected cells.

It localises to the virion. The protein localises to the host nucleus. It is found in the host cytoplasm. Its subcellular location is the host perinuclear region. The protein resides in the secreted. It localises to the virion membrane. The protein localises to the host endoplasmic reticulum membrane. In terms of biological role, plays a role in virus budding by binding to the cell membrane and gathering the viral RNA into a nucleocapsid that forms the core of a mature virus particle. During virus entry, may induce genome penetration into the host cytoplasm after hemifusion induced by the surface proteins. Can migrate to the cell nucleus where it modulates host functions. Overcomes the anti-viral effects of host EXOC1 by sequestering and degrading the latter through the proteasome degradation pathway. Functionally, inhibits RNA silencing by interfering with host Dicer. Prevents premature fusion activity of envelope proteins in trans-Golgi by binding to envelope protein E at pH6.0. After virion release in extracellular space, gets dissociated from E dimers. Its function is as follows. Acts as a chaperone for envelope protein E during intracellular virion assembly by masking and inactivating envelope protein E fusion peptide. prM is the only viral peptide matured by host furin in the trans-Golgi network probably to avoid catastrophic activation of the viral fusion activity in acidic GolGi compartment prior to virion release. prM-E cleavage is inefficient, and many virions are only partially matured. These uncleaved prM would play a role in immune evasion. In terms of biological role, may play a role in virus budding. Exerts cytotoxic effects by activating a mitochondrial apoptotic pathway through M ectodomain. May display a viroporin activity. Functionally, binds to host cell surface receptor and mediates fusion between viral and cellular membranes. Envelope protein is synthesized in the endoplasmic reticulum in the form of heterodimer with protein prM. They play a role in virion budding in the ER, and the newly formed immature particle is covered with 60 spikes composed of heterodimer between precursor prM and envelope protein E. The virion is transported to the Golgi apparatus where the low pH causes dissociation of PrM-E heterodimers and formation of E homodimers. prM-E cleavage is inefficient, and many virions are only partially matured. These uncleaved prM would play a role in immune evasion. Involved in immune evasion, pathogenesis and viral replication. Once cleaved off the polyprotein, is targeted to three destinations: the viral replication cycle, the plasma membrane and the extracellular compartment. Essential for viral replication. Required for formation of the replication complex and recruitment of other non-structural proteins to the ER-derived membrane structures. Excreted as a hexameric lipoparticle that plays a role against host immune response. Antagonizing the complement function. Binds to the host macrophages and dendritic cells. Inhibits signal transduction originating from Toll-like receptor 3 (TLR3). Its function is as follows. Disrupts the host endothelial glycocalyx layer of host pulmonary microvascular endothelial cells, inducing degradation of sialic acid and shedding of heparan sulfate proteoglycans. NS1 induces expression of sialidases, heparanase, and activates cathepsin L, which activates heparanase via enzymatic cleavage. These effects are probably linked to the endothelial hyperpermeability observed in severe dengue disease. The chain is Genome polyprotein from Dengue virus type 1 (strain Jamaica/CV1636/1977) (DENV-1).